The following is a 515-amino-acid chain: 2-isopropylmalate synthase (515 aa).

A Pyruvate carboxyltransferase domain is found at 5–268 (VIIFDTTLRD…VCGIDASQIV (264 aa)). Residues Asp-14, His-202, His-204, and Asn-239 each contribute to the Mn(2+) site. A regulatory domain region spans residues 394–515 (HFISLSQHSE…QAKLNAQMAP (122 aa)).

This sequence belongs to the alpha-IPM synthase/homocitrate synthase family. LeuA type 1 subfamily. Homodimer. Mn(2+) is required as a cofactor.

It localises to the cytoplasm. It catalyses the reaction 3-methyl-2-oxobutanoate + acetyl-CoA + H2O = (2S)-2-isopropylmalate + CoA + H(+). Its pathway is amino-acid biosynthesis; L-leucine biosynthesis; L-leucine from 3-methyl-2-oxobutanoate: step 1/4. Functionally, catalyzes the condensation of the acetyl group of acetyl-CoA with 3-methyl-2-oxobutanoate (2-ketoisovalerate) to form 3-carboxy-3-hydroxy-4-methylpentanoate (2-isopropylmalate). In Polynucleobacter asymbioticus (strain DSM 18221 / CIP 109841 / QLW-P1DMWA-1) (Polynucleobacter necessarius subsp. asymbioticus), this protein is 2-isopropylmalate synthase.